A 259-amino-acid polypeptide reads, in one-letter code: HTH-type quorum sensing-dependent transcriptional regulator VjbR (259 aa).

The segment at 76–179 (KNYFAIDPVF…AGIIHGTVCG (104 aa)) is C12-HSL binding. The 66-residue stretch at 183–248 (ANSVASLLTP…SAVATALSLG (66 aa)) folds into the HTH luxR-type domain. Residues 207 to 226 (DGEIAEILSIARWTVVTYLQ) constitute a DNA-binding region (H-T-H motif).

Functionally, transcriptional regulator involved in the global control of Brucella gene expression. Mediates the effects of the quorum sensing autoinducer C12-HSL (N-dodecanoyl-homoserine lactone) on a large and diverse number of genes. The chain is HTH-type quorum sensing-dependent transcriptional regulator VjbR (vjbR) from Brucella ovis (strain ATCC 25840 / 63/290 / NCTC 10512).